The primary structure comprises 340 residues: NADH-quinone oxidoreductase subunit H (340 aa).

8 helical membrane passes run 4-24, 78-98, 113-133, 151-171, 184-204, 244-264, 273-293, and 316-336; these read TIGI…PLLI, YLFV…WAVI, VLYL…AGWA, VSYE…AGSM, MLHW…ISGI, SMIL…LSPF, IFFI…FLFV, and VLIP…VAHV.

This sequence belongs to the complex I subunit 1 family. In terms of assembly, NDH-1 is composed of 14 different subunits. Subunits NuoA, H, J, K, L, M, N constitute the membrane sector of the complex.

Its subcellular location is the cell inner membrane. It carries out the reaction a quinone + NADH + 5 H(+)(in) = a quinol + NAD(+) + 4 H(+)(out). Its function is as follows. NDH-1 shuttles electrons from NADH, via FMN and iron-sulfur (Fe-S) centers, to quinones in the respiratory chain. The immediate electron acceptor for the enzyme in this species is believed to be ubiquinone. Couples the redox reaction to proton translocation (for every two electrons transferred, four hydrogen ions are translocated across the cytoplasmic membrane), and thus conserves the redox energy in a proton gradient. This subunit may bind ubiquinone. The sequence is that of NADH-quinone oxidoreductase subunit H from Legionella pneumophila (strain Lens).